The following is a 107-amino-acid chain: UPF0060 membrane protein mll7841 (107 aa).

The next 4 helical transmembrane spans lie at 4 to 24 (LFYTAAALAEIAGCFSVWAWW), 30 to 50 (PLWLAPGFVSLLLFAWLLALV), 60 to 80 (AAYGGIYIAASLAWLWLVEGV), and 87 to 107 (LAGAALCIAGASLILLAPRGA).

The protein belongs to the UPF0060 family.

Its subcellular location is the cell inner membrane. The protein is UPF0060 membrane protein mll7841 of Mesorhizobium japonicum (strain LMG 29417 / CECT 9101 / MAFF 303099) (Mesorhizobium loti (strain MAFF 303099)).